Here is a 402-residue protein sequence, read N- to C-terminus: MTGIIHSLLDTDLYKFTMLQVVLHQFPQTHSLYEFRCRNVSTVYPLADIREDLEAELDALCRLRFTHDELGYLRSLRFIKSDFVDYLELFQLQRRFVEVGTDDKGRLNIRIEGPMIQAMFFEIFILAIVNELYFRRLETPAVIEEGERRLQAKAARLKEIAAAQNPDEPPFLISDFGTRRRYKLAWQEHVIRTLLEAAPSIVRGTSNVYLAKKLGITPIGTMAHEFLQAFQALDVRLRNFQKAALESWVHEYRGDLGVALTDVVGMDAFLRDFDLYFAKLFDGLRHDSGDPYVWGDKAYAHYQKLKIDSRTKMLTFSDGLDIERSWALHQYFKGRFKTGFGIGTNLTNDMGHTPLNIVLKLVECNGQSVAKLSDSPGKTMTNNSTFLAYLRQVFGIPEPRTP.

At H224 the chain carries Phosphohistidine; by autocatalysis.

This sequence belongs to the NAPRTase family. Post-translationally, transiently phosphorylated on a His residue during the reaction cycle. Phosphorylation strongly increases the affinity for substrates and increases the rate of nicotinate D-ribonucleotide production. Dephosphorylation regenerates the low-affinity form of the enzyme, leading to product release.

It catalyses the reaction nicotinate + 5-phospho-alpha-D-ribose 1-diphosphate + ATP + H2O = nicotinate beta-D-ribonucleotide + ADP + phosphate + diphosphate. The protein operates within cofactor biosynthesis; NAD(+) biosynthesis; nicotinate D-ribonucleotide from nicotinate: step 1/1. Functionally, catalyzes the synthesis of beta-nicotinate D-ribonucleotide from nicotinate and 5-phospho-D-ribose 1-phosphate at the expense of ATP. This chain is Nicotinate phosphoribosyltransferase, found in Neisseria gonorrhoeae (strain ATCC 700825 / FA 1090).